Reading from the N-terminus, the 883-residue chain is MNEQYSALRSNVSMLGKVLGETIKDALGEHILERVETIRKLSKSSRAGNDANRQELLTTLQNLSNDELLPVARAFSQFLNLANTAEQYHSISPKGEAASNPEVIARTLRKLKNQPELSEDTIKKAVESLSLELVLTAHPTEITRRTLIHKMVEVNACLKQLDNKDIADYEHNQLMRRLRQLIAQSWHTDEIRKLRPSPVDEAKWGFAVVENSLWQGVPNYLRELNEQLEENLGYKLPVEFAPVRFTSWMGGDRDGNPNVTADITRHVLLLSRWKATDLFLKDIQVLVSELSMVEATPELLALVGEEGAAEPYRYLMKNLRSRLMATQAWLEARLKGEELPKPEGLLTQNEELWEPLYACYQSLQACGMGIIANGDLLDTLRRVKCFGVPLVRIDIRQESTRHTEALGELTRYLGIGDYESWSEADKQAFLIRELNSKRPLLPRNWQPSAETREVLDTCQVIAEAPQGSIAAYVISMAKTPSDVLAVHLLLKEAGIGFAMPVAPLFETLDDLNNANDVMTQLLNIDWYRGLIQGKQMVMIGYSDSAKDAGVMAASWAQYQAQDALIKTCEKAGIELTLFHGRGGSIGRGGAPAHAALLSQPPGSLKGGLRVTEQGEMIRFKYGLPEITVSSLSLYTGAILEANLLPPPEPKESWRCIMDELSVISCDVYRGYVRENKDFVPYFRSATPEQELGKLPLGSRPAKRRPTGGVESLRAIPWIFAWTQNRLMLPAWLGAGTALQKVVEDGKQSELEAMCRDWPFFSTRLGMLEMVFAKADLWLAEYYDQRLVDKALWPLGKELRNLQEEDIKVVLAIANDSHLMADLPWIAESIQLRNIYTDPLNVLQAELLHRSRQAEKEGQEPDPRVEQALMVTIAGIAAGMRNTG.

Active-site residues include His138 and Lys546.

It belongs to the PEPCase type 1 family. The cofactor is Mg(2+).

It carries out the reaction oxaloacetate + phosphate = phosphoenolpyruvate + hydrogencarbonate. In terms of biological role, forms oxaloacetate, a four-carbon dicarboxylic acid source for the tricarboxylic acid cycle. The polypeptide is Phosphoenolpyruvate carboxylase (Escherichia coli O81 (strain ED1a)).